A 293-amino-acid polypeptide reads, in one-letter code: MPAGLITALPNQLRAITMQLRLDTNGELSETSQQTVGVPFVENARMTCRKVDVHYGEKCAIKNISIDVGRNEVLAMIGPSGCGKSTFLRCLNRMNDSLASCRVSGDITLDGVNIYAPTVDVVPLRAQVGMVFQKPNPFPKSIFDNVSYGPRIHGLATGKADLSEIVESSLIKAGLWDEVKDRLHESGTSLSGGQQQRLCIARAIAVSPEVILMDEPCSALDPIATAKVEELIAELSTQYSIVIVTHAMQQASRVSQRTAYFHMGSLVEVGATEKIFTNPGHQLTEDYITGRFG.

Positions 46-288 (MTCRKVDVHY…PGHQLTEDYI (243 aa)) constitute an ABC transporter domain. Residue 78 to 85 (GPSGCGKS) coordinates ATP.

The protein belongs to the ABC transporter superfamily. Phosphate importer (TC 3.A.1.7) family. As to quaternary structure, the complex is composed of two ATP-binding proteins (PstB), two transmembrane proteins (PstC and PstA) and a solute-binding protein (PstS).

It is found in the cell inner membrane. It catalyses the reaction phosphate(out) + ATP + H2O = ADP + 2 phosphate(in) + H(+). Functionally, part of the ABC transporter complex PstSACB involved in phosphate import. Responsible for energy coupling to the transport system. This is Phosphate import ATP-binding protein PstB from Desulfotalea psychrophila (strain LSv54 / DSM 12343).